The primary structure comprises 463 residues: Dipeptidyl peptidase 1 (463 aa).

A signal peptide spans 1–24 (MGVGPASLLAALLLLLSGDRAVRC). Asn29, Asn53, and Asn119 each carry an N-linked (GlcNAc...) asparagine glycan. Disulfide bonds link Cys30–Cys118, Cys54–Cys136, Cys255–Cys298, Cys291–Cys331, and Cys321–Cys337. Positions 135–230 (ACFTGKKVGT…TAEIQQKILH (96 aa)) are excised as a propeptide. Cys258 is an active-site residue. N-linked (GlcNAc...) asparagine glycosylation is present at Asn276. 2 residues coordinate chloride: Phe302 and Tyr304. Tyr347 is a binding site for chloride. Active-site residues include His405 and Asn427.

This sequence belongs to the peptidase C1 family. As to quaternary structure, tetramer of heterotrimers consisting of exclusion domain, heavy- and light chains. Requires chloride as cofactor.

Its subcellular location is the lysosome. It carries out the reaction Release of an N-terminal dipeptide, Xaa-Yaa-|-Zaa-, except when Xaa is Arg or Lys, or Yaa or Zaa is Pro.. Thiol protease. Has dipeptidylpeptidase activity. Active against a broad range of dipeptide substrates composed of both polar and hydrophobic amino acids. Proline cannot occupy the P1 position and arginine cannot occupy the P2 position of the substrate. Can act as both an exopeptidase and endopeptidase. Activates serine proteases such as elastase, cathepsin G and granzymes A and B. This is Dipeptidyl peptidase 1 (CTSC) from Macaca fascicularis (Crab-eating macaque).